The primary structure comprises 285 residues: Stress response regulator protein 1 (285 aa).

Low complexity-rich tracts occupy residues aspartate 43–asparagine 58 and serine 128–serine 138. Disordered stretches follow at residues aspartate 43 to glutamine 66 and proline 114 to valine 142. One can recognise a Response regulatory domain in the interval serine 158–aspartate 276. The residue at position 209 (aspartate 209) is a 4-aspartylphosphate.

Functionally, required for stress adaptation, morphogenesis and virulence. The chain is Stress response regulator protein 1 (SRR1) from Candida dubliniensis (strain CD36 / ATCC MYA-646 / CBS 7987 / NCPF 3949 / NRRL Y-17841) (Yeast).